The chain runs to 462 residues: L-seryl-tRNA(Sec) selenium transferase (462 aa).

At K295 the chain carries N6-(pyridoxal phosphate)lysine.

The protein belongs to the SelA family. In terms of assembly, homodecamer; pentamer of dimers. Binds only one seryl-tRNA(Sec) per dimer. Pyridoxal 5'-phosphate is required as a cofactor.

The protein resides in the cytoplasm. It catalyses the reaction L-seryl-tRNA(Sec) + selenophosphate + H(+) = L-selenocysteinyl-tRNA(Sec) + phosphate. It participates in aminoacyl-tRNA biosynthesis; selenocysteinyl-tRNA(Sec) biosynthesis; selenocysteinyl-tRNA(Sec) from L-seryl-tRNA(Sec) (bacterial route): step 1/1. Its function is as follows. Converts seryl-tRNA(Sec) to selenocysteinyl-tRNA(Sec) required for selenoprotein biosynthesis. This chain is L-seryl-tRNA(Sec) selenium transferase, found in Klebsiella pneumoniae subsp. pneumoniae (strain ATCC 700721 / MGH 78578).